The sequence spans 253 residues: Isoprenyl transferase (253 aa).

D32 is a catalytic residue. Mg(2+) is bound at residue D32. Substrate-binding positions include G33–R36, W37, R45, H49, and S77–E79. The Proton acceptor role is filled by N80. Substrate is bound by residues W81, R83, R200, and R206 to S208. E219 is a Mg(2+) binding site.

Belongs to the UPP synthase family. As to quaternary structure, homodimer. Requires Mg(2+) as cofactor.

Functionally, catalyzes the condensation of isopentenyl diphosphate (IPP) with allylic pyrophosphates generating different type of terpenoids. In Clostridium perfringens (strain 13 / Type A), this protein is Isoprenyl transferase.